Here is a 389-residue protein sequence, read N- to C-terminus: Vacuolar protein sorting-associated protein vts1 (389 aa).

Positions 149–335 are disordered; it reads NPQRKAKTPS…RPSQPTKASP (187 aa). Polar residues-rich tracts occupy residues 156–177, 184–219, and 227–282; these read TPSN…TLPT, TNAS…SSEP, and SLSS…PESK. The span at 294–306 shows a compositional bias: low complexity; the sequence is TSITTTSTSIDPS. Positions 308–334 are enriched in polar residues; the sequence is AFSSKSTLATTRTNAPLSRPSQPTKAS.

This sequence belongs to the VTA1 family. Homodimer (in cytoplasm).

It is found in the cytoplasm. It localises to the endosome membrane. Functionally, has a role in the formation of the multivesicular body (MVB). Required for the sorting of lipids to form intralumenal vesicles and for fluid-phase transport to the vacuole. Required for sorting several plasma membrane proteins into the MVB. The chain is Vacuolar protein sorting-associated protein vts1 (vts1) from Schizosaccharomyces pombe (strain 972 / ATCC 24843) (Fission yeast).